Here is a 52-residue protein sequence, read N- to C-terminus: Conotoxin Cal9.2b (52 aa).

The propeptide occupies 1 to 6; the sequence is KKGVTL. 3 disulfides stabilise this stretch: C14-C31, C19-C41, and C21-C46.

As to expression, expressed by the venom duct.

It localises to the secreted. Functionally, probable neurotoxin with unknown target. Possibly targets ion channels. The polypeptide is Conotoxin Cal9.2b (Californiconus californicus (California cone)).